The primary structure comprises 507 residues: GMP synthase [glutamine-hydrolyzing] (507 aa).

The 194-residue stretch at 9–202 folds into the Glutamine amidotransferase type-1 domain; the sequence is TILIIDFGSQ…VHRIVGVKPG (194 aa). The active-site Nucleophile is Cys-86. Residues His-176 and Glu-178 contribute to the active site. The region spanning 203-395 is the GMPS ATP-PPase domain; sequence WTMGAYREQA…LGLPDSFIGR (193 aa). Residue 230–236 coordinates ATP; sequence SGGVDSS.

As to quaternary structure, homodimer.

The catalysed reaction is XMP + L-glutamine + ATP + H2O = GMP + L-glutamate + AMP + diphosphate + 2 H(+). It functions in the pathway purine metabolism; GMP biosynthesis; GMP from XMP (L-Gln route): step 1/1. Catalyzes the synthesis of GMP from XMP. The chain is GMP synthase [glutamine-hydrolyzing] from Brucella melitensis biotype 1 (strain ATCC 23456 / CCUG 17765 / NCTC 10094 / 16M).